Reading from the N-terminus, the 356-residue chain is L-Ala-D/L-Glu epimerase (356 aa).

Residue 161 to 163 (KVK) participates in substrate binding. 3 residues coordinate Mg(2+): Asp191, Glu219, and Asp244. Residues Lys268 and 320–322 (DLD) contribute to the substrate site.

Belongs to the mandelate racemase/muconate lactonizing enzyme family. It depends on Mg(2+) as a cofactor.

The enzyme catalyses L-alanyl-L-glutamate = L-alanyl-D-glutamate. Functionally, dipeptide epimerase with a preference for substrates containing a Glu residue in the second position. Catalyzes the epimerization of L-Ala-L-Glu, L-Ser-L-Glu, L-Thr-L-Glu, L-Val-L-Glu, L-Gly-L-Glu and L-Thr-L-Glu (in vitro). May play a role in the metabolism of the murein peptide, of which L-Ala-D-Glu is a component. The sequence is that of L-Ala-D/L-Glu epimerase from Francisella tularensis subsp. novicida (strain U112).